The sequence spans 729 residues: Sodium-dependent neutral amino acid transporter B(0)AT2 (729 aa).

Over 1–69 (MPKNSKVVKR…ARPAWNSKLQ (69 aa)) the chain is Cytoplasmic. Phosphoserine is present on residues serine 25 and serine 55. The next 3 membrane-spanning stretches (helical) occupy residues 70-90 (YILA…FPYL), 98-117 (AYLL…LFFL), and 142-162 (GIGF…NVII). Topologically, residues 163-225 (GWSLFYFSQS…TSISESGGLN (63 aa)) are extracellular. N-linked (GlcNAc...) asparagine glycans are attached at residues asparagine 187 and asparagine 213. Helical transmembrane passes span 226–244 (WKMT…LAMI), 253–270 (IMYF…CFLI), 306–323 (VFFA…FSSY), and 335–356 (VLVS…FAVL). The Extracellular portion of the chain corresponds to 357–452 (GFKANVINEK…FIAFTEAMTH (96 aa)). Residues asparagine 383 and asparagine 394 are each glycosylated (N-linked (GlcNAc...) asparagine). The next 5 helical transmembrane spans lie at 453-472 (FPAS…NLGL), 496-514 (ILTV…IFVQ), 530-550 (TLPL…VYGI), 571-592 (YMWK…IVNM), and 620-642 (VICI…IRRC). The Cytoplasmic portion of the chain corresponds to 643–729 (NLIDDSSGNL…DMPDMPESDL (87 aa)). Residues serine 687, serine 699, and serine 701 each carry the phosphoserine modification.

The protein belongs to the sodium:neurotransmitter symporter (SNF) (TC 2.A.22) family. SLC6A15 subfamily.

It is found in the membrane. It carries out the reaction L-leucine(in) + Na(+)(in) = L-leucine(out) + Na(+)(out). The enzyme catalyses L-isoleucine(in) + Na(+)(in) = L-isoleucine(out) + Na(+)(out). The catalysed reaction is L-methionine(in) + Na(+)(in) = L-methionine(out) + Na(+)(out). It catalyses the reaction L-proline(in) + Na(+)(in) = L-proline(out) + Na(+)(out). It carries out the reaction L-alanine(in) + Na(+)(in) = L-alanine(out) + Na(+)(out). The enzyme catalyses L-asparagine(in) + Na(+)(in) = L-asparagine(out) + Na(+)(out). The catalysed reaction is L-valine(in) + Na(+)(in) = L-valine(out) + Na(+)(out). It catalyses the reaction L-cysteine(in) + Na(+)(in) = L-cysteine(out) + Na(+)(out). It carries out the reaction L-glutamine(in) + Na(+)(in) = L-glutamine(out) + Na(+)(out). The enzyme catalyses L-serine(in) + Na(+)(in) = L-serine(out) + Na(+)(out). The catalysed reaction is L-threonine(in) + Na(+)(in) = L-threonine(out) + Na(+)(out). It catalyses the reaction L-pipecolate(in) + Na(+)(in) = L-pipecolate(out) + Na(+)(out). It carries out the reaction L-phenylalanine(in) + Na(+)(in) = L-phenylalanine(out) + Na(+)(out). In terms of biological role, functions as a sodium-dependent neutral amino acid transporter. Exhibits preference for the branched-chain amino acids, particularly leucine, valine and isoleucine and methionine. Can also transport low-affinity substrates such as alanine, phenylalanine, glutamine and pipecolic acid. Mediates the saturable, pH-sensitive and electrogenic cotransport of proline and sodium ions with a stoichiometry of 1:1. May have a role as transporter for neurotransmitter precursors into neurons. In contrast to other members of the neurotransmitter transporter family, does not appear to be chloride-dependent. The protein is Sodium-dependent neutral amino acid transporter B(0)AT2 (SLC6A15) of Bos taurus (Bovine).